The chain runs to 1044 residues: Elongation factor 3A (1044 aa).

Ser-2 carries the post-translational modification N-acetylserine. The stretch at 5–42 is one HEAT 1 repeat; sequence QQSIKVLEELFQKLSVATADNRHEIASEVASFLNGNII. Positions 42, 44, and 83 each coordinate ADP. HEAT repeat units lie at residues 86–123, 125–162, 166–203, 205–241, 242–279, and 285–323; these read PYIV…AVNP, AIKA…AAKD, LRMP…TVDN, DIER…EVTP, ATLS…LVED, and PFLG…VGNV. An N6,N6,N6-trimethyllysine mark is found at Lys-187 and Lys-196. Lys-350 participates in a covalent cross-link: Glycyl lysine isopeptide (Lys-Gly) (interchain with G-Cter in ubiquitin). Residues Thr-392, His-396, and Glu-397 each contribute to the ADP site. Residues 426-641 form the ABC transporter 1 domain; sequence DEGEDLCNCE…CPAAKAYEEL (216 aa). Lys-636 is covalently cross-linked (Glycyl lysine isopeptide (Lys-Gly) (interchain with G-Cter in ubiquitin)). A Phosphoserine modification is found at Ser-642. The ABC transporter 2 domain occupies 667–993; sequence VKVTNMEFQY…AGPRIEKKED (327 aa). Asn-703 provides a ligand contact to ADP. Lys-789 bears the N6,N6,N6-trimethyllysine mark. Glu-922, Asn-925, and His-951 together coordinate ADP. Position 972 is a phosphothreonine (Thr-972). A Phosphoserine modification is found at Ser-974. The segment at 974-1044 is disordered; the sequence is SGHNWVSGQG…DAYVSSDEEF (71 aa). The segment covering 1007 to 1031 has biased composition (basic residues); that stretch reads GGKKKKKLSSAELRKKKKERMKKKK. 2 positions are modified to phosphoserine: Ser-1039 and Ser-1040.

It belongs to the ABC transporter superfamily. ABCF family. EF3 subfamily. Monomer. Interacts with elongation factor 1A (eEF1A). Interacts through its N-terminus with 18S rRNA. Associates with ribosomes; preferentially binds ribosomes in the post-translocational state (bearing a peptidyl-tRNA in the P-site) in the presence of ATP, suggesting that ATP hydrolysis is required for ribosome dissociation.

It localises to the cytoplasm. The protein localises to the cytosol. It carries out the reaction ATP + H2O = ADP + phosphate + H(+). The protein operates within protein biosynthesis; polypeptide chain elongation. With respect to regulation, inhibited by the translational inhibitors neomycin and alpha-sarcin, which suppress the ATPase activity. Its function is as follows. Ribosome-dependent ATPase that functions in cytoplasmic translation elongation. Required for the ATP-dependent release of deacylated tRNA from the ribosomal E-site during protein biosynthesis. Stimulates the eEF1A-dependent binding of aminoacyl-tRNA to the ribosomal A-site, which has reduced affinity for tRNA as long as the E-site is occupied. Assists translation termination by stimulating the release of nascent protein from the ribosome by release factors. In nutrient-replete conditions, occupies the space on the ribosome bound by GCN1 during amino acid starvation conditions, and therefore indirectly negatively regulates GCN2 kinase activity in replete conditions. The sequence is that of Elongation factor 3A (YEF3) from Saccharomyces cerevisiae (strain ATCC 204508 / S288c) (Baker's yeast).